The following is a 204-amino-acid chain: ATP-dependent Clp protease proteolytic subunit (204 aa).

Ser102 serves as the catalytic Nucleophile. His127 is an active-site residue.

This sequence belongs to the peptidase S14 family. Fourteen ClpP subunits assemble into 2 heptameric rings which stack back to back to give a disk-like structure with a central cavity, resembling the structure of eukaryotic proteasomes.

It localises to the cytoplasm. It carries out the reaction Hydrolysis of proteins to small peptides in the presence of ATP and magnesium. alpha-casein is the usual test substrate. In the absence of ATP, only oligopeptides shorter than five residues are hydrolyzed (such as succinyl-Leu-Tyr-|-NHMec, and Leu-Tyr-Leu-|-Tyr-Trp, in which cleavage of the -Tyr-|-Leu- and -Tyr-|-Trp bonds also occurs).. Its function is as follows. Cleaves peptides in various proteins in a process that requires ATP hydrolysis. Has a chymotrypsin-like activity. Plays a major role in the degradation of misfolded proteins. This Neisseria meningitidis serogroup C (strain 053442) protein is ATP-dependent Clp protease proteolytic subunit.